Here is a 744-residue protein sequence, read N- to C-terminus: Catalase-peroxidase (744 aa).

An N-terminal signal peptide occupies residues 1-22 (MSPRARRCTDRCARMSERSMNA). The tryptophyl-tyrosyl-methioninium (Trp-Tyr) (with M-260) cross-link spans 114–234 (WHSAGTYRLA…LGATEMGLIY (121 aa)). The Proton acceptor role is filled by H115. Positions 234–260 (YVNPEGPDRNGDPISAAKFIRETFARM) form a cross-link, tryptophyl-tyrosyl-methioninium (Tyr-Met) (with W-114). H275 contributes to the heme b binding site.

Belongs to the peroxidase family. Peroxidase/catalase subfamily. As to quaternary structure, homodimer or homotetramer. It depends on heme b as a cofactor. In terms of processing, formation of the three residue Trp-Tyr-Met cross-link is important for the catalase, but not the peroxidase activity of the enzyme.

It carries out the reaction H2O2 + AH2 = A + 2 H2O. It catalyses the reaction 2 H2O2 = O2 + 2 H2O. Functionally, bifunctional enzyme with both catalase and broad-spectrum peroxidase activity. The polypeptide is Catalase-peroxidase (Azorhizobium caulinodans (strain ATCC 43989 / DSM 5975 / JCM 20966 / LMG 6465 / NBRC 14845 / NCIMB 13405 / ORS 571)).